We begin with the raw amino-acid sequence, 92 residues long: Conotoxin Ac8.1 (92 aa).

The N-terminal stretch at 1 to 19 (LKMGAMFVLLLLFTLASSQ) is a signal peptide. The propeptide occupies 20-44 (QEGDVQARKTSLKSDFYRALRQYDR). A Pyrrolidone carboxylic acid modification is found at Gln45.

It belongs to the conotoxin S superfamily. In terms of processing, contains 5 disulfide bonds. In terms of tissue distribution, expressed by the venom duct.

The protein resides in the secreted. This is Conotoxin Ac8.1 from Conus achatinus (Little frog cone).